The sequence spans 250 residues: 5-oxoprolinase subunit A (250 aa).

Belongs to the LamB/PxpA family. Forms a complex composed of PxpA, PxpB and PxpC.

It carries out the reaction 5-oxo-L-proline + ATP + 2 H2O = L-glutamate + ADP + phosphate + H(+). Catalyzes the cleavage of 5-oxoproline to form L-glutamate coupled to the hydrolysis of ATP to ADP and inorganic phosphate. The polypeptide is 5-oxoprolinase subunit A (Pseudomonas fluorescens (strain ATCC BAA-477 / NRRL B-23932 / Pf-5)).